Reading from the N-terminus, the 398-residue chain is Cytochrome b561 and DOMON domain-containing protein At3g61750 (398 aa).

A signal peptide spans 1–23; sequence MKTLVGFYILCFLIGQDLPFLAA. Positions 64-177 constitute a DOMON domain; sequence NTFVLRYSEN…PRRAVILAFS (114 aa). One can recognise a Cytochrome b561 domain in the interval 184–377; sequence LGRLTKHDDK…LEIFRIRGTI (194 aa). His-220 is a binding site for heme b. Helical transmembrane passes span 222–242 and 252–272; these read VMAI…ARYL and LHIG…ILGI. The heme b site is built by His-253 and His-285. 3 consecutive transmembrane segments (helical) span residues 287–307, 320–340, and 351–371; these read GIGI…FARP, YHHW…VLGI, and KIGY…LEIF. Residue His-321 participates in heme b binding.

Heme b serves as cofactor.

The protein localises to the membrane. Its function is as follows. May act as a catecholamine-responsive trans-membrane electron transporter. This is Cytochrome b561 and DOMON domain-containing protein At3g61750 from Arabidopsis thaliana (Mouse-ear cress).